The chain runs to 167 residues: 3-isopropylmalate dehydratase small subunit (167 aa).

This sequence belongs to the LeuD family. LeuD type 2 subfamily. As to quaternary structure, heterodimer of LeuC and LeuD.

It carries out the reaction (2R,3S)-3-isopropylmalate = (2S)-2-isopropylmalate. It participates in amino-acid biosynthesis; L-leucine biosynthesis; L-leucine from 3-methyl-2-oxobutanoate: step 2/4. In terms of biological role, catalyzes the isomerization between 2-isopropylmalate and 3-isopropylmalate, via the formation of 2-isopropylmaleate. This Nitratidesulfovibrio vulgaris (strain ATCC 29579 / DSM 644 / CCUG 34227 / NCIMB 8303 / VKM B-1760 / Hildenborough) (Desulfovibrio vulgaris) protein is 3-isopropylmalate dehydratase small subunit.